We begin with the raw amino-acid sequence, 167 residues long: Phosphopantetheine adenylyltransferase (167 aa).

Substrate is bound at residue threonine 10. Residues 10-11 (TF) and histidine 18 contribute to the ATP site. Lysine 42, leucine 75, and arginine 89 together coordinate substrate. ATP contacts are provided by residues 90-92 (GVR), glutamate 100, and 125-131 (YTYVASS).

It belongs to the bacterial CoaD family. In terms of assembly, homohexamer. Mg(2+) is required as a cofactor.

The protein localises to the cytoplasm. It catalyses the reaction (R)-4'-phosphopantetheine + ATP + H(+) = 3'-dephospho-CoA + diphosphate. Its pathway is cofactor biosynthesis; coenzyme A biosynthesis; CoA from (R)-pantothenate: step 4/5. In terms of biological role, reversibly transfers an adenylyl group from ATP to 4'-phosphopantetheine, yielding dephospho-CoA (dPCoA) and pyrophosphate. This chain is Phosphopantetheine adenylyltransferase, found in Chlorobium phaeobacteroides (strain DSM 266 / SMG 266 / 2430).